Reading from the N-terminus, the 461-residue chain is Photosystem II CP43 reaction center protein (461 aa).

Residues 1 to 2 (ME) constitute a propeptide that is removed on maturation. T3 bears the N-acetylthreonine mark. Residue T3 is modified to Phosphothreonine. Helical transmembrane passes span 57 to 81 (LFEV…PHIA), 122 to 143 (LIGP…KDKN), 166 to 188 (KAMY…RVIT), 243 to 263 (TPWP…LSYS), and 279 to 300 (WFNN…ASQS). E355 provides a ligand contact to [CaMn4O5] cluster. The helical transmembrane segment at 435–459 (RARAAAAGFEKGIDRFDEPVLSMRP) threads the bilayer.

It belongs to the PsbB/PsbC family. PsbC subfamily. As to quaternary structure, PSII is composed of 1 copy each of membrane proteins PsbA, PsbB, PsbC, PsbD, PsbE, PsbF, PsbH, PsbI, PsbJ, PsbK, PsbL, PsbM, PsbT, PsbX, PsbY, PsbZ, Psb30/Ycf12, at least 3 peripheral proteins of the oxygen-evolving complex and a large number of cofactors. It forms dimeric complexes. The cofactor is Binds multiple chlorophylls and provides some of the ligands for the Ca-4Mn-5O cluster of the oxygen-evolving complex. It may also provide a ligand for a Cl- that is required for oxygen evolution. PSII binds additional chlorophylls, carotenoids and specific lipids.. Phosphorylated in vitro.

It localises to the plastid. Its subcellular location is the chloroplast thylakoid membrane. Its function is as follows. One of the components of the core complex of photosystem II (PSII). It binds chlorophyll and helps catalyze the primary light-induced photochemical processes of PSII. PSII is a light-driven water:plastoquinone oxidoreductase, using light energy to abstract electrons from H(2)O, generating O(2) and a proton gradient subsequently used for ATP formation. The polypeptide is Photosystem II CP43 reaction center protein (Chlamydomonas reinhardtii (Chlamydomonas smithii)).